Reading from the N-terminus, the 158-residue chain is Small ribosomal subunit protein bS6 (158 aa).

Residues 98–158 (EAPSAPLARR…DRDEDQNEEN (61 aa)) are disordered. 2 stretches are compositionally biased toward basic and acidic residues: residues 106–117 (RRGEDRDRDRGF) and 127–150 (DSGR…RSDR).

It belongs to the bacterial ribosomal protein bS6 family.

Binds together with bS18 to 16S ribosomal RNA. The protein is Small ribosomal subunit protein bS6 of Acidiphilium cryptum (strain JF-5).